A 189-amino-acid chain; its full sequence is Proline-rich protein 29 (189 aa).

The interval 152 to 189 (SREREVRAVPPPPPPSATGTVGADVPPASDYYDAESLL) is disordered.

The sequence is that of Proline-rich protein 29 (PRR29) from Homo sapiens (Human).